The sequence spans 416 residues: 4-hydroxy-3-methylbut-2-en-1-yl diphosphate synthase (flavodoxin) (416 aa).

[4Fe-4S] cluster is bound by residues C304, C307, C350, and E357.

Belongs to the IspG family. Requires [4Fe-4S] cluster as cofactor.

It carries out the reaction (2E)-4-hydroxy-3-methylbut-2-enyl diphosphate + oxidized [flavodoxin] + H2O + 2 H(+) = 2-C-methyl-D-erythritol 2,4-cyclic diphosphate + reduced [flavodoxin]. The protein operates within isoprenoid biosynthesis; isopentenyl diphosphate biosynthesis via DXP pathway; isopentenyl diphosphate from 1-deoxy-D-xylulose 5-phosphate: step 5/6. Functionally, converts 2C-methyl-D-erythritol 2,4-cyclodiphosphate (ME-2,4cPP) into 1-hydroxy-2-methyl-2-(E)-butenyl 4-diphosphate. This Allorhizobium ampelinum (strain ATCC BAA-846 / DSM 112012 / S4) (Agrobacterium vitis (strain S4)) protein is 4-hydroxy-3-methylbut-2-en-1-yl diphosphate synthase (flavodoxin).